The primary structure comprises 494 residues: Alpha-amylase-related protein (494 aa).

The signal sequence occupies residues 1 to 20 (MFKFAAAVILCLVAASSTLA). Gln-21 bears the Pyrrolidone carboxylic acid mark. Residues Cys-48 and Cys-104 are joined by a disulfide bond. Positions 118, 169, and 178 each coordinate Ca(2+). Residues Cys-157 and Cys-171 are joined by a disulfide bond. Arg-206 contributes to the chloride binding site. Residue Asp-208 is the Nucleophile of the active site. His-212 is a binding site for Ca(2+). Glu-245 (proton donor) is an active-site residue. Asn-308 and Arg-343 together coordinate chloride. Disulfide bonds link Cys-376-Cys-382, Cys-418-Cys-441, and Cys-448-Cys-460.

It belongs to the glycosyl hydrolase 13 family. In terms of assembly, monomer. The cofactor is Ca(2+). It depends on chloride as a cofactor.

It localises to the secreted. It carries out the reaction Endohydrolysis of (1-&gt;4)-alpha-D-glucosidic linkages in polysaccharides containing three or more (1-&gt;4)-alpha-linked D-glucose units.. The sequence is that of Alpha-amylase-related protein (Amyrel) from Drosophila atripex (Fruit fly).